The primary structure comprises 196 residues: Heat shock protein beta-8 (196 aa).

Phosphoserine is present on residues serine 24 and serine 57. Threonine 63 carries the post-translational modification Phosphothreonine; by PKC; in vitro. Asymmetric dimethylarginine occurs at positions 71 and 78. The sHSP domain maps to 74 to 185 (TATARFGVPA…TFGESSFNNE (112 aa)). The tract at residues 176–196 (TFGESSFNNELPQDSQEVTCT) is disordered. A compositionally biased stretch (polar residues) spans 177–196 (FGESSFNNELPQDSQEVTCT).

It belongs to the small heat shock protein (HSP20) family. In terms of assembly, monomer. Forms a ternary complex with BAG3 and HSPA1A. Component of the chaperone-assisted selective autophagy (CASA) complex consisting of BAG3, HSPA8/HSC70, HSPB8 and STUB1/CHIP. Interacts with HSPB1. Interacts with DNAJB6. Interacts with BAG3. In terms of tissue distribution, predominantly expressed in skeletal muscle and heart.

Its subcellular location is the cytoplasm. The protein resides in the nucleus. In terms of biological role, involved in the chaperone-assisted selective autophagy (CASA), a crucial process for protein quality control, particularly in mechanical strained cells and tissues such as muscle. Displays temperature-dependent chaperone activity. The chain is Heat shock protein beta-8 (HSPB8) from Homo sapiens (Human).